A 634-amino-acid chain; its full sequence is Chaperone protein DnaK (634 aa).

Residue threonine 199 is modified to Phosphothreonine; by autocatalysis. The span at alanine 601–alanine 618 shows a compositional bias: low complexity. The interval alanine 601–lysine 634 is disordered. Residues valine 623–lysine 634 are compositionally biased toward acidic residues.

This sequence belongs to the heat shock protein 70 family.

Acts as a chaperone. The chain is Chaperone protein DnaK from Acidithiobacillus ferrooxidans (strain ATCC 23270 / DSM 14882 / CIP 104768 / NCIMB 8455) (Ferrobacillus ferrooxidans (strain ATCC 23270)).